The chain runs to 704 residues: Histone-lysine N-methyltransferase, H3 lysine-9 specific SUVH1 (704 aa).

Disordered regions lie at residues 1 to 21 (MEQGLRSDGNNPPSIDKTRVL) and 68 to 176 (PFVA…QAEG). Composition is skewed to polar residues over residues 80 to 90 (ESSQQTPSGVP) and 109 to 121 (SFRTPTTANGNSG). Basic residues predominate over residues 159 to 170 (GKKRGRPKKPRR). The 148-residue stretch at 265–412 (GNAPGIEVGD…CNVFKYKLLR (148 aa)) folds into the YDG domain. The Pre-SET domain maps to 487–548 (PSCHCVGGCQ…NCRNRMSQGG (62 aa)). C489, C491, C495, C502, C504, C530, C534, C536, and C540 together coordinate Zn(2+). The SET domain occupies 551 to 681 (ARLEVFKTKN…PMQELTFDYG (131 aa)). Residues 561–563 (RGW), D593, Y595, R635, and 638–639 (NH) contribute to the S-adenosyl-L-methionine site. 4 residues coordinate Zn(2+): C641, C692, C694, and C699. The Post-SET domain occupies 688–704 (RRKKCLCGSLNCRGYFY).

Belongs to the class V-like SAM-binding methyltransferase superfamily. Histone-lysine methyltransferase family. Suvar3-9 subfamily. Interacts with LHP1. As to expression, expressed in roots, stems, leaves and flowers.

Its subcellular location is the nucleus. The protein resides in the chromosome. It carries out the reaction N(6)-methyl-L-lysyl(27)-[histone H3] + S-adenosyl-L-methionine = N(6),N(6)-dimethyl-L-lysyl(27)-[histone H3] + S-adenosyl-L-homocysteine + H(+). It catalyses the reaction L-lysyl(9)-[histone H3] + 2 S-adenosyl-L-methionine = N(6),N(6)-dimethyl-L-lysyl(9)-[histone H3] + 2 S-adenosyl-L-homocysteine + 2 H(+). The enzyme catalyses L-lysyl(27)-[histone H3] + S-adenosyl-L-methionine = N(6)-methyl-L-lysyl(27)-[histone H3] + S-adenosyl-L-homocysteine + H(+). Functionally, histone methyltransferase. Methylates in vitro both 'Lys-9' and 'Lys-27' of histone H3. Required for in vivo dimethylation of 'Lys-9'. H3 'Lys-9' methylation represents a specific tag for epigenetic control for plant development and transcriptional repression. This chain is Histone-lysine N-methyltransferase, H3 lysine-9 specific SUVH1 (SUVH1), found in Nicotiana tabacum (Common tobacco).